The primary structure comprises 133 residues: Cytochrome c-type biogenesis protein CcmE (133 aa).

Residues 1-7 (MKKKHKR) are Cytoplasmic-facing. The helical; Signal-anchor for type II membrane protein transmembrane segment at 8–28 (LLITSGIFCFLSCIVFFILTT) threads the bilayer. Residues 29–133 (LKENISFFYT…YMPKVLKQIP (105 aa)) lie on the Periplasmic side of the membrane. 2 residues coordinate heme: His-120 and Tyr-124.

Belongs to the CcmE/CycJ family.

It localises to the cell inner membrane. Its function is as follows. Heme chaperone required for the biogenesis of c-type cytochromes. Transiently binds heme delivered by CcmC and transfers the heme to apo-cytochromes in a process facilitated by CcmF and CcmH. The protein is Cytochrome c-type biogenesis protein CcmE of Wolbachia sp. subsp. Drosophila simulans (strain wRi).